The sequence spans 156 residues: Ribosomal RNA large subunit methyltransferase H (156 aa).

S-adenosyl-L-methionine is bound by residues L73, G104, and 123-128; that span reads IGPLTL.

This sequence belongs to the RNA methyltransferase RlmH family. Homodimer.

It localises to the cytoplasm. It catalyses the reaction pseudouridine(1915) in 23S rRNA + S-adenosyl-L-methionine = N(3)-methylpseudouridine(1915) in 23S rRNA + S-adenosyl-L-homocysteine + H(+). Its function is as follows. Specifically methylates the pseudouridine at position 1915 (m3Psi1915) in 23S rRNA. The chain is Ribosomal RNA large subunit methyltransferase H from Xanthomonas campestris pv. campestris (strain 8004).